Consider the following 308-residue polypeptide: Ribosomal RNA large subunit methyltransferase F (308 aa).

Belongs to the methyltransferase superfamily. METTL16/RlmF family.

The protein resides in the cytoplasm. The catalysed reaction is adenosine(1618) in 23S rRNA + S-adenosyl-L-methionine = N(6)-methyladenosine(1618) in 23S rRNA + S-adenosyl-L-homocysteine + H(+). Its function is as follows. Specifically methylates the adenine in position 1618 of 23S rRNA. The polypeptide is Ribosomal RNA large subunit methyltransferase F (Escherichia coli (strain K12 / MC4100 / BW2952)).